The sequence spans 159 residues: Ribosomal RNA large subunit methyltransferase H (159 aa).

S-adenosyl-L-methionine is bound by residues L76, G108, and F127–F132.

This sequence belongs to the RNA methyltransferase RlmH family. As to quaternary structure, homodimer.

Its subcellular location is the cytoplasm. It catalyses the reaction pseudouridine(1915) in 23S rRNA + S-adenosyl-L-methionine = N(3)-methylpseudouridine(1915) in 23S rRNA + S-adenosyl-L-homocysteine + H(+). In terms of biological role, specifically methylates the pseudouridine at position 1915 (m3Psi1915) in 23S rRNA. This is Ribosomal RNA large subunit methyltransferase H from Oceanobacillus iheyensis (strain DSM 14371 / CIP 107618 / JCM 11309 / KCTC 3954 / HTE831).